The sequence spans 365 residues: Succinyl-diaminopimelate desuccinylase (365 aa).

Histidine 64 lines the Zn(2+) pocket. Aspartate 66 is a catalytic residue. Aspartate 95 serves as a coordination point for Zn(2+). Glutamate 125 (proton acceptor) is an active-site residue. Glutamate 126, glutamate 154, and histidine 339 together coordinate Zn(2+).

Belongs to the peptidase M20A family. DapE subfamily. In terms of assembly, homodimer. Zn(2+) serves as cofactor. Requires Co(2+) as cofactor.

It carries out the reaction N-succinyl-(2S,6S)-2,6-diaminopimelate + H2O = (2S,6S)-2,6-diaminopimelate + succinate. Its pathway is amino-acid biosynthesis; L-lysine biosynthesis via DAP pathway; LL-2,6-diaminopimelate from (S)-tetrahydrodipicolinate (succinylase route): step 3/3. Its function is as follows. Catalyzes the hydrolysis of N-succinyl-L,L-diaminopimelic acid (SDAP), forming succinate and LL-2,6-diaminopimelate (DAP), an intermediate involved in the bacterial biosynthesis of lysine and meso-diaminopimelic acid, an essential component of bacterial cell walls. This chain is Succinyl-diaminopimelate desuccinylase, found in Sulfurimonas denitrificans (strain ATCC 33889 / DSM 1251) (Thiomicrospira denitrificans (strain ATCC 33889 / DSM 1251)).